The following is a 303-amino-acid chain: Porphobilinogen deaminase (303 aa).

Cysteine 235 carries the S-(dipyrrolylmethanemethyl)cysteine modification.

This sequence belongs to the HMBS family. In terms of assembly, monomer. Requires dipyrromethane as cofactor.

It catalyses the reaction 4 porphobilinogen + H2O = hydroxymethylbilane + 4 NH4(+). Its pathway is porphyrin-containing compound metabolism; protoporphyrin-IX biosynthesis; coproporphyrinogen-III from 5-aminolevulinate: step 2/4. In terms of biological role, tetrapolymerization of the monopyrrole PBG into the hydroxymethylbilane pre-uroporphyrinogen in several discrete steps. This is Porphobilinogen deaminase from Campylobacter fetus subsp. fetus (strain 82-40).